Here is a 68-residue protein sequence, read N- to C-terminus: UPF0435 protein SA1696 (68 aa).

Belongs to the UPF0435 family.

This is UPF0435 protein SA1696 from Staphylococcus aureus (strain N315).